Here is a 345-residue protein sequence, read N- to C-terminus: Methylthioribose-1-phosphate isomerase 2 (345 aa).

Substrate is bound by residues 47–49, Arg-88, and Gln-194; that span reads RGA. Residue Asp-235 is the Proton donor of the active site. 245–246 lines the substrate pocket; the sequence is NK.

The protein belongs to the eIF-2B alpha/beta/delta subunits family. MtnA subfamily.

It carries out the reaction 5-(methylsulfanyl)-alpha-D-ribose 1-phosphate = 5-(methylsulfanyl)-D-ribulose 1-phosphate. The protein operates within amino-acid biosynthesis; L-methionine biosynthesis via salvage pathway; L-methionine from S-methyl-5-thio-alpha-D-ribose 1-phosphate: step 1/6. Catalyzes the interconversion of methylthioribose-1-phosphate (MTR-1-P) into methylthioribulose-1-phosphate (MTRu-1-P). This chain is Methylthioribose-1-phosphate isomerase 2, found in Pseudothermotoga lettingae (strain ATCC BAA-301 / DSM 14385 / NBRC 107922 / TMO) (Thermotoga lettingae).